Here is a 123-residue protein sequence, read N- to C-terminus: UPF0102 protein PFL_5073 (123 aa).

This sequence belongs to the UPF0102 family.

The sequence is that of UPF0102 protein PFL_5073 from Pseudomonas fluorescens (strain ATCC BAA-477 / NRRL B-23932 / Pf-5).